We begin with the raw amino-acid sequence, 417 residues long: Adenylosuccinate synthetase (417 aa).

Residues 11-17 (GDEGKGK) and 39-41 (GHT) contribute to the GTP site. Residue aspartate 12 is the Proton acceptor of the active site. Positions 12 and 39 each coordinate Mg(2+). Residues 12–15 (DEGK), 37–40 (NAGH), threonine 126, arginine 140, glutamine 218, threonine 233, and arginine 295 contribute to the IMP site. Residue histidine 40 is the Proton donor of the active site. A substrate-binding site is contributed by 291 to 297 (TVSGRIR). GTP contacts are provided by residues arginine 297, 323 to 325 (KLD), and 406 to 408 (SNG).

Belongs to the adenylosuccinate synthetase family. As to quaternary structure, homodimer. Requires Mg(2+) as cofactor.

It is found in the cytoplasm. The catalysed reaction is IMP + L-aspartate + GTP = N(6)-(1,2-dicarboxyethyl)-AMP + GDP + phosphate + 2 H(+). It participates in purine metabolism; AMP biosynthesis via de novo pathway; AMP from IMP: step 1/2. In terms of biological role, plays an important role in the de novo pathway of purine nucleotide biosynthesis. Catalyzes the first committed step in the biosynthesis of AMP from IMP. The chain is Adenylosuccinate synthetase from Neorickettsia sennetsu (strain ATCC VR-367 / Miyayama) (Ehrlichia sennetsu).